The primary structure comprises 188 residues: Large ribosomal subunit protein eL18 (188 aa).

Residue Lys-119 forms a Glycyl lysine isopeptide (Lys-Gly) (interchain with G-Cter in SUMO2) linkage. Phosphoserine is present on Ser-130. Residues 150 to 188 (RHFGKAPRTPHSHTKPYVRSKGRKFERARGRWASRGYKN) form a disordered region. Composition is skewed to basic residues over residues 151–171 (HFGKAPRTPHSHTKPYVRSKG) and 179–188 (GRWASRGYKN). Thr-158 is modified (phosphothreonine). Lys-164 participates in a covalent cross-link: Glycyl lysine isopeptide (Lys-Gly) (interchain with G-Cter in SUMO2).

The protein belongs to the eukaryotic ribosomal protein eL18 family. As to quaternary structure, component of the large ribosomal subunit.

It localises to the cytoplasm. Its subcellular location is the cytosol. It is found in the rough endoplasmic reticulum. Component of the large ribosomal subunit. The ribosome is a large ribonucleoprotein complex responsible for the synthesis of proteins in the cell. The sequence is that of Large ribosomal subunit protein eL18 (RPL18) from Oryctolagus cuniculus (Rabbit).